Reading from the N-terminus, the 493-residue chain is Cysteine sulfinic acid decarboxylase (493 aa).

N6-(pyridoxal phosphate)lysine is present on lysine 305.

It belongs to the group II decarboxylase family. In terms of assembly, homodimer. Pyridoxal 5'-phosphate is required as a cofactor. In terms of tissue distribution, expressed in brain, liver and kidney.

The enzyme catalyses L-aspartate + H(+) = beta-alanine + CO2. It catalyses the reaction 3-sulfino-L-alanine + H(+) = hypotaurine + CO2. The catalysed reaction is L-cysteate + H(+) = taurine + CO2. It functions in the pathway organosulfur biosynthesis; taurine biosynthesis; hypotaurine from L-cysteine: step 2/2. Its function is as follows. Catalyzes the decarboxylation of L-aspartate, 3-sulfino-L-alanine (cysteine sulfinic acid), and L-cysteate to beta-alanine, hypotaurine and taurine, respectively. The preferred substrate is 3-sulfino-L-alanine. Does not exhibit any decarboxylation activity toward glutamate. The chain is Cysteine sulfinic acid decarboxylase (Csad) from Rattus norvegicus (Rat).